Consider the following 235-residue polypeptide: Ribonuclease PH (235 aa).

Phosphate-binding positions include arginine 86 and 124-126; that span reads GTR.

It belongs to the RNase PH family. Homohexameric ring arranged as a trimer of dimers.

The enzyme catalyses tRNA(n+1) + phosphate = tRNA(n) + a ribonucleoside 5'-diphosphate. In terms of biological role, phosphorolytic 3'-5' exoribonuclease that plays an important role in tRNA 3'-end maturation. Removes nucleotide residues following the 3'-CCA terminus of tRNAs; can also add nucleotides to the ends of RNA molecules by using nucleoside diphosphates as substrates, but this may not be physiologically important. Probably plays a role in initiation of 16S rRNA degradation (leading to ribosome degradation) during starvation. This Francisella tularensis subsp. holarctica (strain FTNF002-00 / FTA) protein is Ribonuclease PH.